A 205-amino-acid polypeptide reads, in one-letter code: Holliday junction branch migration complex subunit RuvA (205 aa).

The tract at residues 1–64 is domain I; it reads MIGRIRGLLI…EDAQLLYGFI (64 aa). The segment at 65–143 is domain II; the sequence is SKQERSLFRL…SLMEASVGSE (79 aa). Residues 144–156 are flexible linker; it reads REFMLQSNYTAPE. Residues 157–205 form a domain III region; sequence AVNTAEEDAIAALLSLGYKPAQASKAVSSVYTDGMSSETLIKSALKSML.

The protein belongs to the RuvA family. In terms of assembly, homotetramer. Forms an RuvA(8)-RuvB(12)-Holliday junction (HJ) complex. HJ DNA is sandwiched between 2 RuvA tetramers; dsDNA enters through RuvA and exits via RuvB. An RuvB hexamer assembles on each DNA strand where it exits the tetramer. Each RuvB hexamer is contacted by two RuvA subunits (via domain III) on 2 adjacent RuvB subunits; this complex drives branch migration. In the full resolvosome a probable DNA-RuvA(4)-RuvB(12)-RuvC(2) complex forms which resolves the HJ.

The protein resides in the cytoplasm. The RuvA-RuvB-RuvC complex processes Holliday junction (HJ) DNA during genetic recombination and DNA repair, while the RuvA-RuvB complex plays an important role in the rescue of blocked DNA replication forks via replication fork reversal (RFR). RuvA specifically binds to HJ cruciform DNA, conferring on it an open structure. The RuvB hexamer acts as an ATP-dependent pump, pulling dsDNA into and through the RuvAB complex. HJ branch migration allows RuvC to scan DNA until it finds its consensus sequence, where it cleaves and resolves the cruciform DNA. This is Holliday junction branch migration complex subunit RuvA from Shewanella halifaxensis (strain HAW-EB4).